Here is a 415-residue protein sequence, read N- to C-terminus: tRNA (cytosine(38)-C(5))-methyltransferase (415 aa).

An SAM-dependent MTase C5-type domain is found at 4–396; sequence LRVLELYSGI…TVLCEGFGNA (393 aa). S-adenosyl-L-methionine contacts are provided by residues 13 to 15, Asp-34, 57 to 58, and Ser-76; these read IGG and IE. Residue Cys-79 is part of the active site. Residue Ser-376 participates in S-adenosyl-L-methionine binding.

The protein belongs to the class I-like SAM-binding methyltransferase superfamily. C5-methyltransferase family. As to expression, highly expressed in thymus, testis, and at much lower levels in spleen, lung, brain, heart, kidney, liver, skeletal muscle and embryonic stem cells.

The protein resides in the cytoplasm. It carries out the reaction cytidine(38) in tRNA + S-adenosyl-L-methionine = 5-methylcytidine(38) in tRNA + S-adenosyl-L-homocysteine + H(+). In terms of biological role, specifically methylates cytosine 38 in the anticodon loop of tRNA(Asp). Has higher activity on tRNA(Asp) modified with queuosine at position 34. This Mus musculus (Mouse) protein is tRNA (cytosine(38)-C(5))-methyltransferase (Trdmt1).